The chain runs to 252 residues: Imidazole glycerol phosphate synthase subunit HisF (252 aa).

Residues Asp11 and Asp130 contribute to the active site.

This sequence belongs to the HisA/HisF family. Heterodimer of HisH and HisF.

The protein resides in the cytoplasm. It catalyses the reaction 5-[(5-phospho-1-deoxy-D-ribulos-1-ylimino)methylamino]-1-(5-phospho-beta-D-ribosyl)imidazole-4-carboxamide + L-glutamine = D-erythro-1-(imidazol-4-yl)glycerol 3-phosphate + 5-amino-1-(5-phospho-beta-D-ribosyl)imidazole-4-carboxamide + L-glutamate + H(+). Its pathway is amino-acid biosynthesis; L-histidine biosynthesis; L-histidine from 5-phospho-alpha-D-ribose 1-diphosphate: step 5/9. Its function is as follows. IGPS catalyzes the conversion of PRFAR and glutamine to IGP, AICAR and glutamate. The HisF subunit catalyzes the cyclization activity that produces IGP and AICAR from PRFAR using the ammonia provided by the HisH subunit. The sequence is that of Imidazole glycerol phosphate synthase subunit HisF from Staphylococcus saprophyticus subsp. saprophyticus (strain ATCC 15305 / DSM 20229 / NCIMB 8711 / NCTC 7292 / S-41).